The chain runs to 250 residues: Methylthioribulose-1-phosphate dehydratase (250 aa).

The Zn(2+) site is built by His-103 and His-105.

It belongs to the aldolase class II family. MtnB subfamily. The cofactor is Zn(2+).

The catalysed reaction is 5-(methylsulfanyl)-D-ribulose 1-phosphate = 5-methylsulfanyl-2,3-dioxopentyl phosphate + H2O. It participates in amino-acid biosynthesis; L-methionine biosynthesis via salvage pathway; L-methionine from S-methyl-5-thio-alpha-D-ribose 1-phosphate: step 2/6. Its function is as follows. Catalyzes the dehydration of methylthioribulose-1-phosphate (MTRu-1-P) into 2,3-diketo-5-methylthiopentyl-1-phosphate (DK-MTP-1-P). This Leptospira borgpetersenii serovar Hardjo-bovis (strain JB197) protein is Methylthioribulose-1-phosphate dehydratase.